The sequence spans 558 residues: Urocanate hydratase (558 aa).

NAD(+) is bound by residues Gly-54 to Gly-55, Gln-132, Gly-178 to Gly-180, Glu-198, Asn-244 to Ala-245, Gln-265 to His-269, Tyr-275 to Leu-276, and Tyr-324. Residue Cys-412 is part of the active site. Residue Gly-494 coordinates NAD(+).

Belongs to the urocanase family. NAD(+) serves as cofactor.

It is found in the cytoplasm. The enzyme catalyses 4-imidazolone-5-propanoate = trans-urocanate + H2O. Its pathway is amino-acid degradation; L-histidine degradation into L-glutamate; N-formimidoyl-L-glutamate from L-histidine: step 2/3. Catalyzes the conversion of urocanate to 4-imidazolone-5-propionate. This Acinetobacter baumannii (strain ACICU) protein is Urocanate hydratase.